Consider the following 243-residue polypeptide: 3-deoxy-manno-octulosonate cytidylyltransferase (243 aa).

It belongs to the KdsB family.

The protein localises to the cytoplasm. The catalysed reaction is 3-deoxy-alpha-D-manno-oct-2-ulosonate + CTP = CMP-3-deoxy-beta-D-manno-octulosonate + diphosphate. The protein operates within nucleotide-sugar biosynthesis; CMP-3-deoxy-D-manno-octulosonate biosynthesis; CMP-3-deoxy-D-manno-octulosonate from 3-deoxy-D-manno-octulosonate and CTP: step 1/1. Its pathway is bacterial outer membrane biogenesis; lipopolysaccharide biosynthesis. In terms of biological role, activates KDO (a required 8-carbon sugar) for incorporation into bacterial lipopolysaccharide in Gram-negative bacteria. The sequence is that of 3-deoxy-manno-octulosonate cytidylyltransferase from Bartonella quintana (strain Toulouse) (Rochalimaea quintana).